A 348-amino-acid polypeptide reads, in one-letter code: Nicotinate-nucleotide--dimethylbenzimidazole phosphoribosyltransferase (348 aa).

The active-site Proton acceptor is glutamate 316.

This sequence belongs to the CobT family.

The catalysed reaction is 5,6-dimethylbenzimidazole + nicotinate beta-D-ribonucleotide = alpha-ribazole 5'-phosphate + nicotinate + H(+). It participates in nucleoside biosynthesis; alpha-ribazole biosynthesis; alpha-ribazole from 5,6-dimethylbenzimidazole: step 1/2. Functionally, catalyzes the synthesis of alpha-ribazole-5'-phosphate from nicotinate mononucleotide (NAMN) and 5,6-dimethylbenzimidazole (DMB). The chain is Nicotinate-nucleotide--dimethylbenzimidazole phosphoribosyltransferase from Xanthomonas euvesicatoria pv. vesicatoria (strain 85-10) (Xanthomonas campestris pv. vesicatoria).